The following is a 413-amino-acid chain: MEQIPFVSSAPNTLGIELELQLVDPRSFDLAAASDELLAQLANHPIADRVKPEITRSMIELNSSVHEHPAGLLAEMREMRDVLCEAADAVGVGVTGGGAHPFMRWQDRAISDTPRFQYLAEMYGYLARQFTVFGQHIHLGVPSGDAAVRMVRGLSPYVPHFIALSAASPYCEGVDTLFSCCRLNAVNSFPLAGHMPADVTDWYRFEAHLAQLRASGLAESIKDLYWDIRPKPEYGTVEIRVCDTPLTVERACQLAAFAQALAVQVARDPEPSQQAWLAYRSNHFQACRFGLHGSYVTPDGQRVRLVDHLRALFDRLAPVAEELGTGDMLQTLRDEILRNGNDARWLRGQFLKVRELPLVVESMAQNWRGQGVQDTPPSAVRRRIRATSEPVGGVCALSTPQGDPLPGWAERLH.

A disordered region spans residues 392-413 (GGVCALSTPQGDPLPGWAERLH).

It belongs to the glutamate--cysteine ligase type 2 family. YbdK subfamily.

It catalyses the reaction L-cysteine + L-glutamate + ATP = gamma-L-glutamyl-L-cysteine + ADP + phosphate + H(+). In terms of biological role, ATP-dependent carboxylate-amine ligase which exhibits weak glutamate--cysteine ligase activity. This Bordetella bronchiseptica (strain ATCC BAA-588 / NCTC 13252 / RB50) (Alcaligenes bronchisepticus) protein is Putative glutamate--cysteine ligase 2.